The primary structure comprises 785 residues: Endonuclease MutS2 (785 aa).

335 to 342 serves as a coordination point for ATP; it reads GPNTGGKT. The region spanning 710–785 is the Smr domain; sequence LDLRGERYEE…GLGNTVVELR (76 aa). Residues 764 to 785 form a disordered region; it reads VKSARDGGANEGGLGNTVVELR.

The protein belongs to the DNA mismatch repair MutS family. MutS2 subfamily. As to quaternary structure, homodimer. Binds to stalled ribosomes, contacting rRNA.

Functionally, endonuclease that is involved in the suppression of homologous recombination and thus may have a key role in the control of bacterial genetic diversity. Acts as a ribosome collision sensor, splitting the ribosome into its 2 subunits. Detects stalled/collided 70S ribosomes which it binds and splits by an ATP-hydrolysis driven conformational change. Acts upstream of the ribosome quality control system (RQC), a ribosome-associated complex that mediates the extraction of incompletely synthesized nascent chains from stalled ribosomes and their subsequent degradation. Probably generates substrates for RQC. In Halalkalibacterium halodurans (strain ATCC BAA-125 / DSM 18197 / FERM 7344 / JCM 9153 / C-125) (Bacillus halodurans), this protein is Endonuclease MutS2.